A 1583-amino-acid chain; its full sequence is Methyl-CpG-binding domain protein 5/6 homolog sba (1583 aa).

Residues 81 to 115 are disordered; that stretch reads AVHQQQQQHHHQQQQQQQHQQQQQILPAGLVNGNG. Over residues 83–104 the composition is skewed to low complexity; it reads HQQQQQHHHQQQQQQQHQQQQQ. Residues 238–308 form the MBD domain; it reads RKTATSYNGN…YLFDFNAQVP (71 aa). Disordered regions lie at residues 427-457, 556-579, 630-694, 839-862, 940-980, 1179-1247, and 1287-1339; these read NKLP…PTSQ, EPIV…QQQL, VTLV…QTQV, AELH…AASS, PPAQ…ISPQ, VMSR…RSIC, and QESP…SFPL. Residues 430–439 show a composition bias toward low complexity; the sequence is PATNRTATTP. Residues 440–449 are compositionally biased toward pro residues; that stretch reads TPAPTPPPQH. The segment covering 563-579 has biased composition (low complexity); it reads QQQQQQQQQQLQQQQQL. The segment covering 658-677 has biased composition (polar residues); the sequence is AISTSHESPRQSLSSPTDSV. Composition is skewed to low complexity over residues 679 to 693 and 851 to 862; these read SAKS…PQTQ and VSQPSPVAAASS. Composition is skewed to polar residues over residues 1179–1195, 1216–1240, and 1287–1313; these read VMSR…TTTC, CVSS…PSST, and QESP…TVRT. A compositionally biased stretch (low complexity) spans 1323 to 1333; that stretch reads RGAARAAPSAS. One can recognise a PWWP domain in the interval 1346–1408; sequence IGELIWGPAR…VNSLQSLSEG (63 aa). A coiled-coil region spans residues 1415–1446; it reads AQKDTRKSRKLNSQLERAIQEAMTELDNISAS. The interval 1471-1497 is disordered; it reads IGGQQQYQQQQQQQQQQQSPSSTNNKI. The segment covering 1474 to 1488 has biased composition (low complexity); the sequence is QQQYQQQQQQQQQQQ.

As to quaternary structure, component of the polycomb repressive deubiquitinase (PR-DUB) complex, at least composed of caly/calypso, Asx and sba (MDB5/6 homolog). Interacts (via MBD domain) with Asx (via PHD domain); the interaction is important for the stability of the PR-DUB complex.

Its function is as follows. Non-catalytic component of the polycomb repressive deubiquitinase (PR-DUB) complex, a complex that specifically mediates deubiquitination of histone H2A monoubiquitinated at 'Lys-119' (H2AK118ub1). Important for maintaining stability of the PR-DUB complex. Probable epigenetic regulator involved in developmental pattern formation and eye development. This Drosophila melanogaster (Fruit fly) protein is Methyl-CpG-binding domain protein 5/6 homolog sba.